Consider the following 487-residue polypeptide: Probable nuclear hormone receptor HR3 (487 aa).

The segment at residues Ile-48–Phe-123 is a DNA-binding region (nuclear receptor). NR C4-type zinc fingers lie at residues Cys-51–Cys-71 and Cys-87–Cys-111. Positions Met-145–Ser-176 are disordered. Residues Val-157–Asp-167 show a composition bias toward polar residues. Residues Ile-237–Ile-480 enclose the NR LBD domain.

It belongs to the nuclear hormone receptor family. NR1 subfamily.

It localises to the nucleus. Functionally, putative receptor whose ligand is not yet known. The sequence is that of Probable nuclear hormone receptor HR3 from Drosophila melanogaster (Fruit fly).